The chain runs to 605 residues: DNA primase (605 aa).

Residues 39–63 (CPFHHERTPSFHVVPDKKMYYCFGC) form a CHC2-type zinc finger. The Toprim domain occupies 257–338 (RAAIICEGYM…EVRIVELNGG (82 aa)). Mg(2+)-binding residues include Glu263, Asp307, and Asp309.

It belongs to the DnaG primase family. As to quaternary structure, monomer. Interacts with DnaB. Zn(2+) serves as cofactor. Mg(2+) is required as a cofactor.

The catalysed reaction is ssDNA + n NTP = ssDNA/pppN(pN)n-1 hybrid + (n-1) diphosphate.. RNA polymerase that catalyzes the synthesis of short RNA molecules used as primers for DNA polymerase during DNA replication. This chain is DNA primase, found in Treponema pallidum (strain Nichols).